The sequence spans 884 residues: MAENALPKGYEPRDVEERWRRHWEDNRTFTPDMDAPGEPYSIVIPPPNVTGALHIGHALNHVLIDVLCRNARQQGKKVLWLPGTDHAGIATQNVVERALAKEGLSRHDLGREAFIERVWQWKEEYGNRILNQIRMLGDSVDWTRERFTMDEGLSKAVRKVFVDLYNGGYIYRGNYIINWCNRCHTALADDEVDHMPEQGHLYHVRYDFEDGSGSVVIATTRPETIMADTGVCVHPEDERYAGLIGKKILVPVIGRAVPLFADTYVDREFGTGALKVTPCHDPNDWTLGERHGLAFIQCIDEDGNMTAEAGPYAGLTKEECRKRIVADLEASGQLVRVEELNHSVGHCYRCKTVVEPHMSEQWFVASTKLAPRARAAVPQMTQIFPESWMKTYFNWLDNIRDWCISRQIWWGHRIPAWTCGKCGKLIVSEQDPTACPDCGCTDLTQDPDVLDTWFSSALWPFSTMGWPDKTKDLATFYPTSVLVTGFDILFFWVARMMMLGMHFMDEVPFKHVYLHALVRDGEGRKMSKSTGNVIDPLAMIDKYGTDSLRFTLAAFAAMGRDIKLSEDRIEGYRHFVNKVWNAARFSLMNLPEEAPAALDLDNVKGMHHKWILHRLEELKASQAAGIDGYRFNEVAQGLYRFWWNEFCDWYLELIKPDMQAGGERQATAQYVLWTVLREALLLLHPFMPFVTAEVWQALPGHAGDDIATKLYPAARPGCRDVKDAEHMELVQATISAVRTIRAELNIAPSYRLTTLVRPASAEDAATLEEGREMLMTLARLDGLTVAVDVEAPKASASSVVAGNEVIVPLTGAVDFEAELARLDKELGKIEKDFVQVNKKLANESFVSKAPADVVAKERARAEELSDAKAKLEALQQRFRDAIGK.

The short motif at 47–57 (PNVTGALHIGH) is the 'HIGH' region element. The 'KMSKS' region signature appears at 525–529 (KMSKS). Residue Lys528 coordinates ATP. The stretch at 812-884 (AVDFEAELAR…QQRFRDAIGK (73 aa)) forms a coiled coil.

It belongs to the class-I aminoacyl-tRNA synthetase family. ValS type 1 subfamily. As to quaternary structure, monomer.

It localises to the cytoplasm. It carries out the reaction tRNA(Val) + L-valine + ATP = L-valyl-tRNA(Val) + AMP + diphosphate. In terms of biological role, catalyzes the attachment of valine to tRNA(Val). As ValRS can inadvertently accommodate and process structurally similar amino acids such as threonine, to avoid such errors, it has a 'posttransfer' editing activity that hydrolyzes mischarged Thr-tRNA(Val) in a tRNA-dependent manner. The polypeptide is Valine--tRNA ligase (Nitratidesulfovibrio vulgaris (strain ATCC 29579 / DSM 644 / CCUG 34227 / NCIMB 8303 / VKM B-1760 / Hildenborough) (Desulfovibrio vulgaris)).